A 259-amino-acid chain; its full sequence is tRNA-cytidine(32) 2-sulfurtransferase (259 aa).

The PP-loop motif signature appears at 37-42 (SGGKDS). Residues Cys-112, Cys-115, and Cys-202 each contribute to the [4Fe-4S] cluster site.

It belongs to the TtcA family. In terms of assembly, homodimer. The cofactor is Mg(2+). It depends on [4Fe-4S] cluster as a cofactor.

Its subcellular location is the cytoplasm. The enzyme catalyses cytidine(32) in tRNA + S-sulfanyl-L-cysteinyl-[cysteine desulfurase] + AH2 + ATP = 2-thiocytidine(32) in tRNA + L-cysteinyl-[cysteine desulfurase] + A + AMP + diphosphate + H(+). Its pathway is tRNA modification. Catalyzes the ATP-dependent 2-thiolation of cytidine in position 32 of tRNA, to form 2-thiocytidine (s(2)C32). The sulfur atoms are provided by the cysteine/cysteine desulfurase (IscS) system. This is tRNA-cytidine(32) 2-sulfurtransferase from Syntrophotalea carbinolica (strain DSM 2380 / NBRC 103641 / GraBd1) (Pelobacter carbinolicus).